A 236-amino-acid chain; its full sequence is Phosphatidylserine decarboxylase proenzyme (236 aa).

Ser-194 acts as the Schiff-base intermediate with substrate; via pyruvic acid in catalysis. At Ser-194 the chain carries Pyruvic acid (Ser); by autocatalysis.

It belongs to the phosphatidylserine decarboxylase family. PSD-A subfamily. Heterodimer of a large membrane-associated beta subunit and a small pyruvoyl-containing alpha subunit. Requires pyruvate as cofactor. Post-translationally, is synthesized initially as an inactive proenzyme. Formation of the active enzyme involves a self-maturation process in which the active site pyruvoyl group is generated from an internal serine residue via an autocatalytic post-translational modification. Two non-identical subunits are generated from the proenzyme in this reaction, and the pyruvate is formed at the N-terminus of the alpha chain, which is derived from the carboxyl end of the proenzyme. The post-translation cleavage follows an unusual pathway, termed non-hydrolytic serinolysis, in which the side chain hydroxyl group of the serine supplies its oxygen atom to form the C-terminus of the beta chain, while the remainder of the serine residue undergoes an oxidative deamination to produce ammonia and the pyruvoyl prosthetic group on the alpha chain.

The protein resides in the cell membrane. It carries out the reaction a 1,2-diacyl-sn-glycero-3-phospho-L-serine + H(+) = a 1,2-diacyl-sn-glycero-3-phosphoethanolamine + CO2. Its pathway is phospholipid metabolism; phosphatidylethanolamine biosynthesis; phosphatidylethanolamine from CDP-diacylglycerol: step 2/2. Catalyzes the formation of phosphatidylethanolamine (PtdEtn) from phosphatidylserine (PtdSer). The polypeptide is Phosphatidylserine decarboxylase proenzyme (Rhodospirillum rubrum (strain ATCC 11170 / ATH 1.1.1 / DSM 467 / LMG 4362 / NCIMB 8255 / S1)).